The sequence spans 234 residues: Large ribosomal subunit protein uL1 (234 aa).

Belongs to the universal ribosomal protein uL1 family. As to quaternary structure, part of the 50S ribosomal subunit.

Functionally, binds directly to 23S rRNA. The L1 stalk is quite mobile in the ribosome, and is involved in E site tRNA release. In terms of biological role, protein L1 is also a translational repressor protein, it controls the translation of the L11 operon by binding to its mRNA. The protein is Large ribosomal subunit protein uL1 of Wolinella succinogenes (strain ATCC 29543 / DSM 1740 / CCUG 13145 / JCM 31913 / LMG 7466 / NCTC 11488 / FDC 602W) (Vibrio succinogenes).